Consider the following 122-residue polypeptide: Large ribosomal subunit protein uL14 (122 aa).

It belongs to the universal ribosomal protein uL14 family. Part of the 50S ribosomal subunit. Forms a cluster with proteins L3 and L19. In the 70S ribosome, L14 and L19 interact and together make contacts with the 16S rRNA in bridges B5 and B8.

In terms of biological role, binds to 23S rRNA. Forms part of two intersubunit bridges in the 70S ribosome. This Mycobacterium marinum (strain ATCC BAA-535 / M) protein is Large ribosomal subunit protein uL14.